We begin with the raw amino-acid sequence, 124 residues long: Fluoride-specific ion channel FluC (124 aa).

Helical transmembrane passes span 4 to 24, 32 to 52, 68 to 88, and 96 to 116; these read VIFIGIFGALGCLCRYYLSGW, AFPYGTFAVNIIGAFLIGLIM, GLTIGFLGGLTTFSTFSYETF, and LLIASVNVLTSVLVCLVFTWL. Residues Gly75 and Thr78 each contribute to the Na(+) site.

This sequence belongs to the fluoride channel Fluc/FEX (TC 1.A.43) family.

It is found in the cell inner membrane. The catalysed reaction is fluoride(in) = fluoride(out). Na(+) is not transported, but it plays an essential structural role and its presence is essential for fluoride channel function. In terms of biological role, fluoride-specific ion channel. Important for reducing fluoride concentration in the cell, thus reducing its toxicity. In Geotalea daltonii (strain DSM 22248 / JCM 15807 / FRC-32) (Geobacter daltonii), this protein is Fluoride-specific ion channel FluC.